The chain runs to 302 residues: D-alanine--D-alanine ligase (302 aa).

An ATP-grasp domain is found at 104 to 296; it reads KLVFERFAIP…FPDLVTWLVE (193 aa). ATP is bound at residue 130–183; the sequence is AMARPYVVKPLDQGSSVGVTIVTSETNDLPFSRDDWPYGRQVMVERFIPGRELT. Asp251, Glu263, and Asn265 together coordinate Mg(2+).

It belongs to the D-alanine--D-alanine ligase family. It depends on Mg(2+) as a cofactor. Mn(2+) serves as cofactor.

The protein localises to the cytoplasm. The enzyme catalyses 2 D-alanine + ATP = D-alanyl-D-alanine + ADP + phosphate + H(+). It functions in the pathway cell wall biogenesis; peptidoglycan biosynthesis. Functionally, cell wall formation. This Rhodospirillum rubrum (strain ATCC 11170 / ATH 1.1.1 / DSM 467 / LMG 4362 / NCIMB 8255 / S1) protein is D-alanine--D-alanine ligase.